The sequence spans 442 residues: Tryptophan synthase beta chain 2 (442 aa).

N6-(pyridoxal phosphate)lysine is present on Lys-110.

It belongs to the TrpB family. As to quaternary structure, tetramer of two alpha and two beta chains. The cofactor is pyridoxal 5'-phosphate.

The enzyme catalyses (1S,2R)-1-C-(indol-3-yl)glycerol 3-phosphate + L-serine = D-glyceraldehyde 3-phosphate + L-tryptophan + H2O. Its pathway is amino-acid biosynthesis; L-tryptophan biosynthesis; L-tryptophan from chorismate: step 5/5. The beta subunit is responsible for the synthesis of L-tryptophan from indole and L-serine. This is Tryptophan synthase beta chain 2 from Thermococcus kodakarensis (strain ATCC BAA-918 / JCM 12380 / KOD1) (Pyrococcus kodakaraensis (strain KOD1)).